A 396-amino-acid polypeptide reads, in one-letter code: Elongation factor Tu (396 aa).

One can recognise a tr-type G domain in the interval 10-206; that stretch reads KPHVNVGTIG…ALDTYIPTPE (197 aa). A G1 region spans residues 19–26; sequence GHVDHGKT. Residue 19–26 coordinates GTP; it reads GHVDHGKT. Threonine 26 contacts Mg(2+). The interval 60–64 is G2; that stretch reads GITIN. Positions 81-84 are G3; sequence DCPG. GTP contacts are provided by residues 81 to 85 and 136 to 139; these read DCPGH and NKCD. The segment at 136-139 is G4; sequence NKCD. A G5 region spans residues 174-176; that stretch reads SAK.

It belongs to the TRAFAC class translation factor GTPase superfamily. Classic translation factor GTPase family. EF-Tu/EF-1A subfamily. Monomer.

The protein resides in the cytoplasm. The catalysed reaction is GTP + H2O = GDP + phosphate + H(+). In terms of biological role, GTP hydrolase that promotes the GTP-dependent binding of aminoacyl-tRNA to the A-site of ribosomes during protein biosynthesis. The chain is Elongation factor Tu from Paraburkholderia xenovorans (strain LB400).